A 256-amino-acid polypeptide reads, in one-letter code: Hydroxyethylthiazole kinase (256 aa).

M37 contributes to the substrate binding site. ATP is bound by residues K113 and T159. G186 is a binding site for substrate.

Belongs to the Thz kinase family. The cofactor is Mg(2+).

It carries out the reaction 5-(2-hydroxyethyl)-4-methylthiazole + ATP = 4-methyl-5-(2-phosphooxyethyl)-thiazole + ADP + H(+). It participates in cofactor biosynthesis; thiamine diphosphate biosynthesis; 4-methyl-5-(2-phosphoethyl)-thiazole from 5-(2-hydroxyethyl)-4-methylthiazole: step 1/1. Functionally, catalyzes the phosphorylation of the hydroxyl group of 4-methyl-5-beta-hydroxyethylthiazole (THZ). The chain is Hydroxyethylthiazole kinase from Exiguobacterium sibiricum (strain DSM 17290 / CCUG 55495 / CIP 109462 / JCM 13490 / 255-15).